A 292-amino-acid chain; its full sequence is Expansin-like protein 6 (292 aa).

The signal sequence occupies residues methionine 1–alanine 24. The Extracellular portion of the chain corresponds to aspartate 25 to leucine 267. Positions histidine 47–asparagine 150 constitute an Expansin-like EG45 domain. 2 disulfide bridges follow: cysteine 50/cysteine 80 and cysteine 83/cysteine 145. N-linked (GlcNAc...) asparagine glycosylation is present at asparagine 92. A helical transmembrane segment spans residues proline 268–phenylalanine 288. The Cytoplasmic portion of the chain corresponds to serine 289–tyrosine 292.

The protein belongs to the expansin family. Expansin A subfamily.

Its subcellular location is the membrane. May serve to lubricate the movement of the cellulose microfibrils during cell growth and wall extension and/or may serve to maintain the fluid state of the slug cell wall. The protein is Expansin-like protein 6 (expl6) of Dictyostelium discoideum (Social amoeba).